A 319-amino-acid polypeptide reads, in one-letter code: Transcription factor VBP (319 aa).

2 stretches are compositionally biased toward low complexity: residues 1–31 and 143–158; these read MPGRAAHQEAAAAGGAAAEPTAAGGSAGAVA and ASASTGSPVSSSSTAV. Disordered stretches follow at residues 1–35 and 139–186; these read MPGRAAHQEAAAAGGAAAEPTAAGGSAGAVAQQPE and EKEP…DPDC. A compositionally biased stretch (polar residues) spans 159–180; it reads YQQSEAASSTESPPQNERNTPS. Residues 243-306 form the bZIP domain; it reads DEKYWTRRKK…GRCKNIVSKY (64 aa). Positions 245 to 265 are basic motif; it reads KYWTRRKKNNVAAKRSRDARR. The tract at residues 266 to 273 is leucine-zipper; sequence LKENQITI.

It belongs to the bZIP family. PAR subfamily. Binds DNA as a homodimer or a heterodimer. Exists as a stable dimer in the absence of DNA. Isoform 1 and isoform 3 are expressed in a variety of somatic tissues, including liver, heart, intestine, stomach and kidney. Both isoforms are also expressed in hepatoma (LMH) cells and in embryonic fibroblast cell lines. Isoform 2 and isoform 4 are expressed in adult heart and intestine.

It is found in the nucleus. In terms of biological role, transcription factor that binds to and transactivates the vitellogenin II (VTG2) promoter. Binds to the palindromic sequence 5'-GTTTACATAAAC-3'. This is Transcription factor VBP (TEF) from Gallus gallus (Chicken).